A 551-amino-acid polypeptide reads, in one-letter code: Bestrophin-1 (551 aa).

Over 1 to 31 the chain is Cytoplasmic; the sequence is MTITYTNKVANARLGSFSSLLLCWRGSIYKL. Residue Ala-10 participates in Ca(2+) binding. Residues 32–51 form a helical membrane-spanning segment; it reads LYGEFLVFIFLYYSIRGLYR. The Extracellular segment spans residues 52–60; it reads MVLSSDQQL. A helical transmembrane segment spans residues 61–82; that stretch reads LFEKLALYCDSYIQLIPISFVL. At 83–237 the chain is on the cytoplasmic side; the sequence is GFYVTLVVSR…DWISIPLVYT (155 aa). Residues 238-255 traverse the membrane as a helical segment; the sequence is QVVTVAVYSFFLACLIGR. Over 256–274 the chain is Extracellular; it reads QFLNPNKDYPGHEMDLVVP. Residues 275-288 form a helical membrane-spanning segment; it reads VFTILQFLFYMGWL. Residues 289–551 lie on the Cytoplasmic side of the membrane; that stretch reads KVAEQLINPF…EAGTKPVLYE (263 aa). Gln-293, Asn-296, Asp-301, and Asp-304 together coordinate Ca(2+). The segment at 346 to 379 is auto-inhibitory segment; the sequence is PYTAASARSRRHSFMGSTFNISLKKEDLELWSKE. The segment at 459–489 is disordered; it reads SHCGPQAPSSHPTEQSAPSSSDTGDGPSTDY. A compositionally biased stretch (polar residues) spans 465–475; that stretch reads APSSHPTEQSA. Residues 476 to 488 are compositionally biased toward low complexity; it reads PSSSDTGDGPSTD.

Belongs to the anion channel-forming bestrophin (TC 1.A.46) family. Calcium-sensitive chloride channel subfamily. Interacts with YWHAG; this interaction promotes the ligand-gated L-glutamate channel activity leading to the positive regulation of NMDA glutamate receptor activity through the L-glutamate secretion.

It is found in the cell membrane. The protein localises to the basolateral cell membrane. It carries out the reaction 4-aminobutanoate(in) = 4-aminobutanoate(out). It catalyses the reaction L-glutamate(out) = L-glutamate(in). The enzyme catalyses chloride(in) = chloride(out). The catalysed reaction is hydrogencarbonate(in) = hydrogencarbonate(out). It carries out the reaction D-serine(in) = D-serine(out). Inactivated by sulfhydryl-reactive agents. Its function is as follows. Ligand-gated anion channel that allows the movement of anions across cell membranes when activated by calcium (Ca2+). Allows the movement of chloride and hydrogencarbonate. Found in a partially open conformation leading to significantly smaller chloride movement. Upon F2R/PAR-1 activation, the sequestered calcium is released into the cytosol of astrocytes, leading to the (Ca2+)-dependent release of L-glutamate into the synaptic cleft that targets the neuronal postsynaptic GRIN2A/NMDAR receptor resulting in the synaptic plasticity regulation. Upon activation of the norepinephrine-alpha-1 adrenergic receptor signaling pathway, transports as well D-serine than L-glutamate in a (Ca2+)-dependent manner, leading to activation of adjacent NMDAR receptors and therefore regulates the heterosynaptic long-term depression and metaplasticity during initial memory acquisition. Releases the 4-aminobutanoate neurotransmitter in a (Ca2+)-dependent manner, and participates in its tonic release from cerebellar glial cells. This Mus musculus (Mouse) protein is Bestrophin-1.